A 442-amino-acid chain; its full sequence is Citrate synthase (442 aa).

Catalysis depends on residues histidine 274, histidine 320, and aspartate 375.

The protein belongs to the citrate synthase family.

The catalysed reaction is oxaloacetate + acetyl-CoA + H2O = citrate + CoA + H(+). It participates in carbohydrate metabolism; tricarboxylic acid cycle; isocitrate from oxaloacetate: step 1/2. Functionally, catalyzes both citrate generation and citrate cleavage. Part of a reversible tricarboxylic acid (TCA) cycle that can fix carbon dioxide autotrophically and may represent an ancestral mode of the conventional reductive TCA (rTCA) cycle. The direction is controlled by the available carbon source(s). The polypeptide is Citrate synthase (Thermosulfidibacter takaii (strain DSM 17441 / JCM 13301 / NBRC 103674 / ABI70S6)).